Here is a 143-residue protein sequence, read N- to C-terminus: Nucleoside diphosphate kinase (143 aa).

ATP-binding residues include Lys11, Phe59, Arg87, Thr93, Arg104, and Asn114. His117 functions as the Pros-phosphohistidine intermediate in the catalytic mechanism.

This sequence belongs to the NDK family. Homotetramer. Requires Mg(2+) as cofactor.

Its subcellular location is the cytoplasm. It carries out the reaction a 2'-deoxyribonucleoside 5'-diphosphate + ATP = a 2'-deoxyribonucleoside 5'-triphosphate + ADP. It catalyses the reaction a ribonucleoside 5'-diphosphate + ATP = a ribonucleoside 5'-triphosphate + ADP. Its function is as follows. Major role in the synthesis of nucleoside triphosphates other than ATP. The ATP gamma phosphate is transferred to the NDP beta phosphate via a ping-pong mechanism, using a phosphorylated active-site intermediate. The chain is Nucleoside diphosphate kinase from Clostridium perfringens (strain SM101 / Type A).